A 545-amino-acid chain; its full sequence is ATP synthase subunit alpha (545 aa).

172–179 lines the ATP pocket; it reads GDRKTGKT.

It belongs to the ATPase alpha/beta chains family. F-type ATPases have 2 components, CF(1) - the catalytic core - and CF(0) - the membrane proton channel. CF(1) has five subunits: alpha(3), beta(3), gamma(1), delta(1), epsilon(1). CF(0) has three main subunits: a(1), b(2) and c(9-12). The alpha and beta chains form an alternating ring which encloses part of the gamma chain. CF(1) is attached to CF(0) by a central stalk formed by the gamma and epsilon chains, while a peripheral stalk is formed by the delta and b chains.

It localises to the cell membrane. It carries out the reaction ATP + H2O + 4 H(+)(in) = ADP + phosphate + 5 H(+)(out). Functionally, produces ATP from ADP in the presence of a proton gradient across the membrane. The alpha chain is a regulatory subunit. In Nocardia farcinica (strain IFM 10152), this protein is ATP synthase subunit alpha.